We begin with the raw amino-acid sequence, 215 residues long: UPF0502 protein YceH (215 aa).

An N6-acetyllysine modification is found at K80.

The protein belongs to the UPF0502 family.

The polypeptide is UPF0502 protein YceH (Escherichia coli O157:H7).